Here is a 689-residue protein sequence, read N- to C-terminus: Ribonuclease J (689 aa).

The disordered stretch occupies residues 1 to 88 (MTDNNQNNEN…RNYAQEELDS (88 aa)). The span at 9–24 (ENHENSSENSKADEMR) shows a compositional bias: basic and acidic residues. The segment covering 56–78 (HHKKEHRPNKKPNNHHKQKHAKT) has biased composition (basic residues). N6-acetyllysine occurs at positions 132 and 138. Zn(2+) is bound by residues His206, His208, Asp210, His211, His275, and Asp297. N6-acetyllysine is present on residues Lys321, Lys335, and Lys395. Position 498 to 502 (498 to 502 (HVSGH)) interacts with substrate. Lys509 carries the N6-acetyllysine modification. Residue His524 participates in Zn(2+) binding. An N6-acetyllysine mark is found at Lys545, Lys632, and Lys647.

Belongs to the metallo-beta-lactamase superfamily. RNA-metabolizing metallo-beta-lactamase-like family. Bacterial RNase J subfamily. Homodimer. Homotetramer; dimer of homodimers. Interacts with RNA helicase RhpA, might be a member of a minimal RNA degradosome complex. The cofactor is Zn(2+). Acetylated on nine lysine residues. Some of the residues are acetylated by multiple different mechanisms. RimL is partially responsible for the acetylation of Lys-321, Lys-395 and Lys-647. HPB8_1270 homolog is partially responsible for the acetylation of Lys-321, Lys-395, Lys-509 and Lys-647. Acetyl-phosphate-mediated non-enzymatic acetylation pathway takes part in the acetylation of Lys-132, Lys-321, Lys-395, Lys-509 and Lys-647. Acetylation of the remaining residues Lys-138, Lys-335, Lys-545 and Lys-632 occurs by a yet undetermined mechanism. Acetylation on a number of these residues is important for growth regulation and proper cell morphology.

It is found in the cytoplasm. Catalytic activity is regulated by the balance between homodimers and homotetramers, with homotetramers being the active forms of this enzyme. Acetylation allosterically regulates the homooligomerization state and hence the catalytic activity. An RNase that has 5'-3' exoribonuclease and endoribonuclease activity. Degrades 5'-monophosphorylated ssRNA and dsRNA, considerably more active on ssRNA. Association with RhpA significantly increases the dsRNase activity. Degrades RNA substrate with hairpin structures at both ends with low activity, but presence of RhpA significantly increases the activity on this substrate. Stimulates ATPase activity of RNA helicase RhpA. Involved in stabilization of mRNA but apparently not rRNA. The polypeptide is Ribonuclease J (Helicobacter pylori (strain ATCC 700392 / 26695) (Campylobacter pylori)).